Consider the following 591-residue polypeptide: Aspartate--tRNA ligase (591 aa).

Residue E173 participates in L-aspartate binding. Residues 197 to 200 (QLFK) are aspartate. R219 serves as a coordination point for L-aspartate. ATP-binding positions include 219–221 (RDE) and Q228. H448 is an L-aspartate binding site. E482 provides a ligand contact to ATP. R489 contacts L-aspartate. 534–537 (GLDR) lines the ATP pocket.

It belongs to the class-II aminoacyl-tRNA synthetase family. Type 1 subfamily. Homodimer.

The protein localises to the cytoplasm. The catalysed reaction is tRNA(Asp) + L-aspartate + ATP = L-aspartyl-tRNA(Asp) + AMP + diphosphate. Its function is as follows. Catalyzes the attachment of L-aspartate to tRNA(Asp) in a two-step reaction: L-aspartate is first activated by ATP to form Asp-AMP and then transferred to the acceptor end of tRNA(Asp). This Shewanella amazonensis (strain ATCC BAA-1098 / SB2B) protein is Aspartate--tRNA ligase.